A 1460-amino-acid chain; its full sequence is Centrosomal protein of 164 kDa (1460 aa).

The interval 1–194 is interaction with ATRIP; it reads MAGRPLRIGD…PSQGLKTSAY (194 aa). The 34-residue stretch at 56–89 folds into the WW domain; the sequence is APLPGEWKPCQDITGDIYYFNFANGQSMWDHPCD. The segment at 107-135 is disordered; sequence GAIKKKKKKKEKKDKKDRDPPKSSLALGS. Residues 109-119 show a composition bias toward basic residues; sequence IKKKKKKKEKK. At serine 186 the chain carries Phosphoserine; by ATR and ATM. Serine 201 is modified (phosphoserine). 3 disordered regions span residues 213–412, 440–593, and 658–719; these read GLGE…HGLD, AQQP…AALK, and EEAR…QKNR. A compositionally biased stretch (acidic residues) spans 217–227; sequence ETNEEDEEESD. Over residues 256 to 270 the composition is skewed to basic and acidic residues; that stretch reads ESLRTSQPEEKKDVS. Residues 285-296 are compositionally biased toward low complexity; the sequence is SSPGADSSLSSA. Composition is skewed to basic and acidic residues over residues 310 to 323 and 357 to 367; these read LPEK…EPKI and EGSRREEAAKE. Positions 453-464 are enriched in low complexity; sequence QSSQDELQSKQS. Residues 465 to 481 show a composition bias toward basic and acidic residues; sequence KGLEERLSPPLPHEERA. A compositionally biased stretch (low complexity) spans 514–525; sequence SAASLSLQLSLQ. Basic and acidic residues predominate over residues 537 to 546; the sequence is EKGKEQHSQA. The residue at position 566 (serine 566) is a Phosphoserine. Composition is skewed to basic and acidic residues over residues 658–668 and 686–719; these read EEARMREEESQ and DQIR…QKNR. A coiled-coil region spans residues 1154–1206; that stretch reads GIKALEDMRKNLEKETRHLDEMKSAMRKGHNLLKKKEEKLNQLESSLWEEASD. The segment at 1290–1310 is disordered; that stretch reads PPPLLASMPAQLPPRDPKSTP. Phosphoserine is present on residues serine 1386, serine 1388, and serine 1443.

As to quaternary structure, interacts (via N-terminus) with ATRIP. Interacts with ATM, ATR and MDC1. Interacts with XPA (via N-terminus) upon UV irradiation. Interacts with CEP83, CCDC92, TTBK2, DVL3, NPHP3 and weakly with NPHP4. Interacts with DZIP1. Phosphorylation at Ser-186 is induced upon DNA-damage caused by treatment with IR irradiation, UV irradiation, hydroxyurea or amphidicolin. Also MDC1-mediated chromatin remodeling is critical for DNA damage-induced phosphorylation. Expressed in several cell lines.

Its subcellular location is the cytoplasm. The protein resides in the cytoskeleton. It localises to the microtubule organizing center. The protein localises to the centrosome. It is found in the centriole. Its subcellular location is the nucleus. In terms of biological role, plays a role in microtubule organization and/or maintenance for the formation of primary cilia (PC), a microtubule-based structure that protrudes from the surface of epithelial cells. Plays a critical role in G2/M checkpoint and nuclear divisions. A key player in the DNA damage-activated ATR/ATM signaling cascade since it is required for the proper phosphorylation of H2AX, RPA, CHEK2 and CHEK1. Plays a critical role in chromosome segregation, acting as a mediator required for the maintenance of genomic stability through modulation of MDC1, RPA and CHEK1. The protein is Centrosomal protein of 164 kDa (CEP164) of Homo sapiens (Human).